Reading from the N-terminus, the 156-residue chain is Probable succinate transporter subunit YjjB (156 aa).

Helical transmembrane passes span 7-27 (WALLQDMVLAAVPALGFAMVF), 54-74 (FGMNIEWASFLAAILIGIIGI), 86-106 (VFTVAAVIPMFPGISAYTAMI), and 128-148 (FLKASFIVGALSIGLSLPGIW).

It belongs to the ThrE exporter (TC 2.A.79) family. The transporter is composed of YjjB and YjjP.

Its subcellular location is the cell inner membrane. Its function is as follows. Involved in succinate export with YjjP. Both proteins are required for export. The sequence is that of Probable succinate transporter subunit YjjB from Pectobacterium atrosepticum (strain SCRI 1043 / ATCC BAA-672) (Erwinia carotovora subsp. atroseptica).